The sequence spans 178 residues: Cytidylate kinase (178 aa).

7–15 (GLPGTGTTT) serves as a coordination point for ATP.

The protein belongs to the cytidylate kinase family. Type 2 subfamily.

It localises to the cytoplasm. It carries out the reaction CMP + ATP = CDP + ADP. The catalysed reaction is dCMP + ATP = dCDP + ADP. This chain is Cytidylate kinase (cmk), found in Methanocaldococcus jannaschii (strain ATCC 43067 / DSM 2661 / JAL-1 / JCM 10045 / NBRC 100440) (Methanococcus jannaschii).